The sequence spans 289 residues: uncharacterized protein (289 aa).

The next 9 helical transmembrane spans lie at 13-32 (INFA…LSGS), 37-59 (LIIS…HLND), 80-99 (IVTE…IFFI), 104-121 (EIAL…WLYS), 141-160 (VFTY…TIFS), 165-183 (VGVV…GFFL), 203-225 (VLSP…FVVI), 235-252 (TSSL…FAIY), and 265-287 (IISS…AIGC).

It localises to the cell membrane. This is an uncharacterized protein from Archaeoglobus fulgidus (strain ATCC 49558 / DSM 4304 / JCM 9628 / NBRC 100126 / VC-16).